The primary structure comprises 470 residues: Argininosuccinate lyase (470 aa).

This sequence belongs to the lyase 1 family. Argininosuccinate lyase subfamily.

The protein localises to the cytoplasm. The enzyme catalyses 2-(N(omega)-L-arginino)succinate = fumarate + L-arginine. It participates in amino-acid biosynthesis; L-arginine biosynthesis; L-arginine from L-ornithine and carbamoyl phosphate: step 3/3. This Mycobacterium tuberculosis (strain ATCC 25618 / H37Rv) protein is Argininosuccinate lyase.